A 192-amino-acid polypeptide reads, in one-letter code: UPF0301 protein Jann_3896 (192 aa).

It belongs to the UPF0301 (AlgH) family.

This Jannaschia sp. (strain CCS1) protein is UPF0301 protein Jann_3896.